A 148-amino-acid polypeptide reads, in one-letter code: Sporulation inhibitor of replication protein SirA (148 aa).

The protein belongs to the SirA family. As to quaternary structure, interacts with DnaA. Forms a 1:1 complex with domain I of DnaA.

The protein resides in the cytoplasm. Functionally, inhibits DNA replication initiation during sporulation, preventing overinitiation and thus enforcing diploidy; probably the main regulator of sporulation replication initiation under Spo0A control. During sporulation SirA prevents DnaA association with the replication origin to prevent excessive chromosome replication. Alternatively SirA binds to domain I of DnaA and prevent its interaction with DnaD, preventing DNA replication initiation. Upon ectopic expression during vegetative growth reduces chromosome copy number, leading to elongated cells with that can have a single nucleoid or be anucleate. Ectopic expression during vegetative growth blocks DnaA at oriC while blocking recruitment of DnaD to oriC. Plays a significant role during the onset of sporulation. The polypeptide is Sporulation inhibitor of replication protein SirA (Bacillus subtilis (strain 168)).